The primary structure comprises 809 residues: Glycerol-3-phosphate acyltransferase (809 aa).

Residues 306 to 311 carry the HXXXXD motif motif; sequence HRSHMD.

The protein belongs to the GPAT/DAPAT family.

The protein resides in the cell inner membrane. It carries out the reaction sn-glycerol 3-phosphate + an acyl-CoA = a 1-acyl-sn-glycero-3-phosphate + CoA. The protein operates within phospholipid metabolism; CDP-diacylglycerol biosynthesis; CDP-diacylglycerol from sn-glycerol 3-phosphate: step 1/3. The polypeptide is Glycerol-3-phosphate acyltransferase (Vibrio vulnificus (strain YJ016)).